The chain runs to 184 residues: Lactoylglutathione lyase (184 aa).

A2 is subject to N-acetylalanine. C19 and C20 are joined by a disulfide. In terms of domain architecture, VOC spans 31 to 177 (LLQQTMLRVK…DGYWIEILNP (147 aa)). Substrate-binding residues include Q34 and R38. Zn(2+) is bound at residue Q34. A disulfide bridge links C61 with C139. K88 is subject to N6-succinyllysine. E100 lines the Zn(2+) pocket. N104 serves as a coordination point for substrate. At T107 the chain carries Phosphothreonine. Positions 123 and 127 each coordinate substrate. H127 serves as a coordination point for Zn(2+). An S-glutathionyl cysteine; alternate modification is found at C139. The residue at position 148 (K148) is an N6-acetyllysine; alternate. At K148 the chain carries N6-succinyllysine; alternate. A substrate-binding site is contributed by 157–158 (KM). E173 contributes to the Zn(2+) binding site. E173 acts as the Proton donor/acceptor in catalysis.

Belongs to the glyoxalase I family. Homodimer. Zn(2+) serves as cofactor. In terms of processing, glutathionylation at Cys-139 inhibits enzyme activity. Phosphorylated at Thr-107 in the presence of CaMK2. However, this is a consensus site for phosphorylation by CK2 so phosphorylation may be mediated by CK2 rather than CaMK2. Phosphorylation is induced by TNF and suppresses the TNF-induced transcriptional activity of NF-kappa-B. Post-translationally, exists in a nitric oxide (NO)-modified form. The exact nature of the modification is unknown, but it suppresses the TNF-induced transcriptional activity of NF-kappa-B.

The catalysed reaction is (R)-S-lactoylglutathione = methylglyoxal + glutathione. The protein operates within secondary metabolite metabolism; methylglyoxal degradation; (R)-lactate from methylglyoxal: step 1/2. With respect to regulation, regulated by oxidation of Cys-139 in response to the redox state of the cell. Results in the alternative formation of cystine or glutathione-bound cysteine, the latter modification leading to reduced enzyme activity. Functionally, catalyzes the conversion of hemimercaptal, formed from methylglyoxal and glutathione, to S-lactoylglutathione. Involved in the regulation of TNF-induced transcriptional activity of NF-kappa-B. Required for normal osteoclastogenesis. This Homo sapiens (Human) protein is Lactoylglutathione lyase (GLO1).